The primary structure comprises 252 residues: Imidazole glycerol phosphate synthase subunit HisF (252 aa).

Residues Asp11 and Asp130 contribute to the active site.

Belongs to the HisA/HisF family. In terms of assembly, heterodimer of HisH and HisF.

Its subcellular location is the cytoplasm. It catalyses the reaction 5-[(5-phospho-1-deoxy-D-ribulos-1-ylimino)methylamino]-1-(5-phospho-beta-D-ribosyl)imidazole-4-carboxamide + L-glutamine = D-erythro-1-(imidazol-4-yl)glycerol 3-phosphate + 5-amino-1-(5-phospho-beta-D-ribosyl)imidazole-4-carboxamide + L-glutamate + H(+). It participates in amino-acid biosynthesis; L-histidine biosynthesis; L-histidine from 5-phospho-alpha-D-ribose 1-diphosphate: step 5/9. IGPS catalyzes the conversion of PRFAR and glutamine to IGP, AICAR and glutamate. The HisF subunit catalyzes the cyclization activity that produces IGP and AICAR from PRFAR using the ammonia provided by the HisH subunit. The protein is Imidazole glycerol phosphate synthase subunit HisF of Staphylococcus saprophyticus subsp. saprophyticus (strain ATCC 15305 / DSM 20229 / NCIMB 8711 / NCTC 7292 / S-41).